Here is a 158-residue protein sequence, read N- to C-terminus: C-type lectin galactose-binding isoform (158 aa).

A signal peptide spans 1–23 (MGRFLLVTLSLLVMAFFLNGANS). 3 disulfides stabilise this stretch: Cys26/Cys37, Cys54/Cys154, and Cys129/Cys146. The C-type lectin domain occupies 33 to 155 (RNGFCYKVFN…CTALRPFLCQ (123 aa)). Ca(2+) is bound by residues Gln119, Asp121, and Glu127. Residues 119–121 (QPD) carry the Galactose-binding motif. Asn134 is a glycosylation site (N-linked (GlcNAc...) asparagine). Positions 142 and 143 each coordinate Ca(2+).

It belongs to the true venom lectin family. As to quaternary structure, dimer. Probably disulfide-linked homodimer. In terms of tissue distribution, expressed by the venom gland.

The protein localises to the secreted. Functionally, galactose-binding lectin that binds to and agglutinates erythrocytes in a calcium-dependent manner. The protein is C-type lectin galactose-binding isoform of Pseudechis australis (Mulga snake).